The following is a 387-amino-acid chain: GTPase Obg (387 aa).

Residues 1–159 (MKFVDEAIIR…RSLKLELLLL (159 aa)) enclose the Obg domain. Positions 160-333 (ADVGLLGMPN…LALKLLDFID (174 aa)) constitute an OBG-type G domain. GTP is bound by residues 166–173 (GMPNAGKS), 191–195 (FTTLV), 213–216 (DIPG), 283–286 (NKAD), and 314–316 (SAY). Positions 173 and 193 each coordinate Mg(2+).

The protein belongs to the TRAFAC class OBG-HflX-like GTPase superfamily. OBG GTPase family. In terms of assembly, monomer. Mg(2+) serves as cofactor.

The protein resides in the cytoplasm. Its function is as follows. An essential GTPase which binds GTP, GDP and possibly (p)ppGpp with moderate affinity, with high nucleotide exchange rates and a fairly low GTP hydrolysis rate. Plays a role in control of the cell cycle, stress response, ribosome biogenesis and in those bacteria that undergo differentiation, in morphogenesis control. This is GTPase Obg from Shewanella pealeana (strain ATCC 700345 / ANG-SQ1).